We begin with the raw amino-acid sequence, 258 residues long: Probable succinate transporter subunit YjjP (258 aa).

The next 5 helical transmembrane spans lie at 116 to 137 (YPRW…KLNN), 143 to 160 (AVVT…RQLL), 171 to 191 (FCIT…LPAF), 197 to 217 (IAMA…NAVA), and 231 to 251 (WAIA…AMTM).

It belongs to the ThrE exporter (TC 2.A.79) family. As to quaternary structure, the transporter is composed of YjjB and YjjP.

Its subcellular location is the cell inner membrane. Functionally, involved in succinate export with YjjB. Both proteins are required for export. Participates in succinate export, but also in the export of other dicarboxylates, such as fumarate and malate. Contributes to succinate production under both aerobic and anaerobic conditions, and increases fumarate and malate production during anaerobic succinate production. In Klebsiella aerogenes (strain ATCC 13048 / DSM 30053 / CCUG 1429 / JCM 1235 / KCTC 2190 / NBRC 13534 / NCIMB 10102 / NCTC 10006 / CDC 819-56) (Enterobacter aerogenes), this protein is Probable succinate transporter subunit YjjP.